Consider the following 216-residue polypeptide: 3-isopropylmalate dehydratase small subunit (216 aa).

The protein belongs to the LeuD family. LeuD type 1 subfamily. In terms of assembly, heterodimer of LeuC and LeuD.

The catalysed reaction is (2R,3S)-3-isopropylmalate = (2S)-2-isopropylmalate. Its pathway is amino-acid biosynthesis; L-leucine biosynthesis; L-leucine from 3-methyl-2-oxobutanoate: step 2/4. Functionally, catalyzes the isomerization between 2-isopropylmalate and 3-isopropylmalate, via the formation of 2-isopropylmaleate. The chain is 3-isopropylmalate dehydratase small subunit from Burkholderia mallei (strain NCTC 10247).